The chain runs to 974 residues: Mediator of RNA polymerase II transcription subunit 16 (974 aa).

The interval 62-92 is disordered; sequence ESSSTLSTHSTTTSVNGSTTAGVGSTPNFGG. Low complexity predominate over residues 63–75; the sequence is SSSTLSTHSTTTS. Positions 76–92 are enriched in polar residues; that stretch reads VNGSTTAGVGSTPNFGG. Positions 889-893 match the Nuclear localization signal motif; the sequence is KLPIK.

The protein belongs to the Mediator complex subunit 16 family. Component of the Mediator complex, which is composed of at least 21 subunits that form three structurally distinct submodules. The Mediator head module contains MED6, MED8, MED11, SRB4/MED17, SRB5/MED18, ROX3/MED19, SRB2/MED20 and SRB6/MED22, the middle module contains MED1, MED4, NUT1/MED5, MED7, CSE2/MED9, NUT2/MED10, SRB7/MED21 and SOH1/MED31, and the tail module contains MED2, PGD1/MED3, RGR1/MED14, GAL11/MED15 and SIN4/MED16. The head and the middle modules interact directly with RNA polymerase II, whereas the elongated tail module interacts with gene-specific regulatory proteins. Interacts with HOG1. Phosphorylated by KIN28.

It is found in the nucleus. Component of the Mediator complex, a coactivator involved in the regulated transcription of nearly all RNA polymerase II-dependent genes. Mediator functions as a bridge to convey information from gene-specific regulatory proteins to the basal RNA polymerase II transcription machinery. The Mediator complex, having a compact conformation in its free form, is recruited to promoters by direct interactions with regulatory proteins and serves for the assembly of a functional preinitiation complex with RNA polymerase II and the general transcription factors. The Mediator complex unfolds to an extended conformation and partially surrounds RNA polymerase II, specifically interacting with the unphosphorylated form of the C-terminal domain (CTD) of RNA polymerase II. The Mediator complex dissociates from the RNA polymerase II holoenzyme and stays at the promoter when transcriptional elongation begins. The sequence is that of Mediator of RNA polymerase II transcription subunit 16 (SIN4) from Saccharomyces cerevisiae (strain ATCC 204508 / S288c) (Baker's yeast).